A 118-amino-acid chain; its full sequence is Non-specific lipid-transfer protein A (118 aa).

The first 25 residues, 1–25 (MAGVMKLACLVLACMIVAGPITANR), serve as a signal peptide directing secretion. Cystine bridges form between C29–C76, C39–C53, C54–C100, and C74–C114.

This sequence belongs to the plant LTP family.

Functionally, plant non-specific lipid-transfer proteins transfer phospholipids as well as galactolipids across membranes. May play a role in wax or cutin deposition in the cell walls of expanding epidermal cells and certain secretory tissues. In Brassica oleracea var. italica (Broccoli), this protein is Non-specific lipid-transfer protein A (WAX9A).